A 392-amino-acid chain; its full sequence is MFLVGEALIGKEPEVAHIDLLIGDKNGPVGIAFANGLTQLSAGHTPLLSVIRPNLLAKPSTLIVPKVTVKNMEQAAIIFGPAQTAVAKAVADAVEEGVIPKERAEELVIIVSVFIHPDAKDYDAIYRYNYGATKLAIQRAMEGFPDVDKVLYEKERSVHPVMGYRVMRLWDPPYLQIAFDIVDLAEVKRVLSEIPESDHLLIEMGTPLVKMHGVQVVREVRRARPGSFVVLDLKTLDTGNLEVRLAADASADAVVISGLAPRKTIELAIKEAKKTGIYSIVDMLNVRDPVEVLRSLSVLPDVVELHRAIDMENSEHAWQSIPEIKSLGGKILVAVAGGIRVDNVRDALRAGADIIVVGRAITRSKDVRDMTEQFLSQLKKSEIDQYRIMTDF.

Positions 1-161 are formaldehyde-activating enzyme; the sequence is MFLVGEALIG…YEKERSVHPV (161 aa). Residue His-17 is the Proton donor of the active site. Substrate-binding residues include Asp-19, Leu-48, Lys-66, Thr-68, and Gln-83. Residues 162-392 form a 3-hexulose-6-phosphate synthase region; the sequence is MGYRVMRLWD…IDQYRIMTDF (231 aa).

This sequence in the N-terminal section; belongs to the formaldehyde-activating enzyme family. The protein in the C-terminal section; belongs to the HPS/KGPDC family. HPS subfamily.

The enzyme catalyses 5,6,7,8-tetrahydromethanopterin + formaldehyde = 5,10-methylenetetrahydromethanopterin + H2O. The catalysed reaction is D-ribulose 5-phosphate + formaldehyde = D-arabino-hex-3-ulose 6-phosphate. Its pathway is carbohydrate biosynthesis; D-ribose 5-phosphate biosynthesis. In terms of biological role, catalyzes the condensation of formaldehyde with tetrahydromethanopterin (H(4)MPT) to 5,10-methylenetetrahydromethanopterin. Its function is as follows. Catalyzes the reversible formation of ribulose-5-phosphate and formaldehyde from 3-hexulose-6-phosphate. The protein is Bifunctional enzyme Fae/Hps of Methanothrix thermoacetophila (strain DSM 6194 / JCM 14653 / NBRC 101360 / PT) (Methanosaeta thermophila).